The sequence spans 417 residues: NADH-quinone oxidoreductase subunit D (417 aa).

The protein belongs to the complex I 49 kDa subunit family. NDH-1 is composed of 14 different subunits. Subunits NuoB, C, D, E, F, and G constitute the peripheral sector of the complex.

The protein localises to the cell inner membrane. The enzyme catalyses a quinone + NADH + 5 H(+)(in) = a quinol + NAD(+) + 4 H(+)(out). Functionally, NDH-1 shuttles electrons from NADH, via FMN and iron-sulfur (Fe-S) centers, to quinones in the respiratory chain. The immediate electron acceptor for the enzyme in this species is believed to be ubiquinone. Couples the redox reaction to proton translocation (for every two electrons transferred, four hydrogen ions are translocated across the cytoplasmic membrane), and thus conserves the redox energy in a proton gradient. This chain is NADH-quinone oxidoreductase subunit D, found in Halorhodospira halophila (strain DSM 244 / SL1) (Ectothiorhodospira halophila (strain DSM 244 / SL1)).